The sequence spans 314 residues: Olfactory receptor 8U9 (314 aa).

At 1–25 (MAQINCTQVTEFILVGLTDREELKM) the chain is on the extracellular side. N5 carries an N-linked (GlcNAc...) asparagine glycan. Residues 26–46 (PLFVVFLSIYLFTTLGNLGLI) traverse the membrane as a helical segment. Residues 47–54 (LVIRTDAR) lie on the Cytoplasmic side of the membrane. The helical transmembrane segment at 55 to 75 (LHTPMYFFLSNLAFVDFCYSS) threads the bilayer. The Extracellular segment spans residues 76 to 99 (VITPKMLGNFLYKQNMISFNACAA). Residues C97 and C189 are joined by a disulfide bond. A helical transmembrane segment spans residues 100–120 (QLGCFLAFMTAECLLLASMAY). Topologically, residues 121 to 133 (DRYVAICNPLLYM) are cytoplasmic. A helical transmembrane segment spans residues 134-154 (VLMSPGICFQLVAAPYSYSFL). Over 155–196 (VALFHAILTFRLCYCHSNAINHFYCDDMPLLRLTCSDTHSKQ) the chain is Extracellular. Residues 197-217 (LWIFVCAGIMFISSLLIVFIS) traverse the membrane as a helical segment. The Cytoplasmic portion of the chain corresponds to 218 to 237 (YTFIISAILRMRSAEGRRKA). A helical membrane pass occupies residues 238–258 (FSTCGSHMLAVTIFYGTLIFM). Residues 259-271 (YLQPSSNHSLDTD) lie on the Extracellular side of the membrane. N265 carries N-linked (GlcNAc...) asparagine glycosylation. Residues 272-292 (KMASVFYTVIIPMLNPLIYSL) traverse the membrane as a helical segment. The Cytoplasmic segment spans residues 293-314 (RNKEVKDALKKLIASKNQMLSS).

The protein belongs to the G-protein coupled receptor 1 family.

Its subcellular location is the cell membrane. In terms of biological role, potential odorant receptor. The polypeptide is Olfactory receptor 8U9 (Mus musculus (Mouse)).